Reading from the N-terminus, the 445-residue chain is Chromosome partition protein MukF (445 aa).

Residues 212 to 240 form a leucine-zipper region; sequence LDETSGNLRELQDTLNAAGDKLQEQLLRI.

Belongs to the MukF family. As to quaternary structure, interacts, and probably forms a ternary complex, with MukE and MukB via its C-terminal region. The complex formation is stimulated by calcium or magnesium. It is required for an interaction between MukE and MukB.

It localises to the cytoplasm. Its subcellular location is the nucleoid. In terms of biological role, involved in chromosome condensation, segregation and cell cycle progression. May participate in facilitating chromosome segregation by condensation DNA from both sides of a centrally located replisome during cell division. Not required for mini-F plasmid partitioning. Probably acts via its interaction with MukB and MukE. Overexpression results in anucleate cells. It has a calcium binding activity. The sequence is that of Chromosome partition protein MukF from Mannheimia succiniciproducens (strain KCTC 0769BP / MBEL55E).